A 622-amino-acid polypeptide reads, in one-letter code: Carbon monoxide dehydrogenase (622 aa).

[4Fe-4S] cluster-binding residues include Cys-40, Cys-49, Cys-52, Cys-57, and Cys-68. [Ni-4Fe-5S] cluster-binding residues include His-256, Cys-334, Cys-442, Cys-473, and Cys-514.

The protein belongs to the Ni-containing carbon monoxide dehydrogenase family. In terms of assembly, homodimer. It depends on [4Fe-4S] cluster as a cofactor. The cofactor is [Ni-4Fe-5S] cluster.

The catalysed reaction is CO + 2 oxidized [2Fe-2S]-[ferredoxin] + H2O = 2 reduced [2Fe-2S]-[ferredoxin] + CO2 + 2 H(+). CODH oxidizes carbon monoxide coupled, via CooF, to the reduction of a hydrogen cation by a hydrogenase (possibly CooH). In Archaeoglobus fulgidus (strain ATCC 49558 / DSM 4304 / JCM 9628 / NBRC 100126 / VC-16), this protein is Carbon monoxide dehydrogenase (cooS).